A 78-amino-acid chain; its full sequence is Large ribosomal subunit protein uL29 (78 aa).

The protein belongs to the universal ribosomal protein uL29 family.

The polypeptide is Large ribosomal subunit protein uL29 (Rhodococcus erythropolis (strain PR4 / NBRC 100887)).